A 220-amino-acid chain; its full sequence is Phosphatidylserine decarboxylase proenzyme (220 aa).

Ser-189 acts as the Schiff-base intermediate with substrate; via pyruvic acid in catalysis. At Ser-189 the chain carries Pyruvic acid (Ser); by autocatalysis.

Belongs to the phosphatidylserine decarboxylase family. PSD-A subfamily. As to quaternary structure, heterodimer of a large membrane-associated beta subunit and a small pyruvoyl-containing alpha subunit. Requires pyruvate as cofactor. In terms of processing, is synthesized initially as an inactive proenzyme. Formation of the active enzyme involves a self-maturation process in which the active site pyruvoyl group is generated from an internal serine residue via an autocatalytic post-translational modification. Two non-identical subunits are generated from the proenzyme in this reaction, and the pyruvate is formed at the N-terminus of the alpha chain, which is derived from the carboxyl end of the proenzyme. The post-translation cleavage follows an unusual pathway, termed non-hydrolytic serinolysis, in which the side chain hydroxyl group of the serine supplies its oxygen atom to form the C-terminus of the beta chain, while the remainder of the serine residue undergoes an oxidative deamination to produce ammonia and the pyruvoyl prosthetic group on the alpha chain.

It is found in the cell membrane. It catalyses the reaction a 1,2-diacyl-sn-glycero-3-phospho-L-serine + H(+) = a 1,2-diacyl-sn-glycero-3-phosphoethanolamine + CO2. It participates in phospholipid metabolism; phosphatidylethanolamine biosynthesis; phosphatidylethanolamine from CDP-diacylglycerol: step 2/2. Functionally, catalyzes the formation of phosphatidylethanolamine (PtdEtn) from phosphatidylserine (PtdSer). The chain is Phosphatidylserine decarboxylase proenzyme from Pelobacter propionicus (strain DSM 2379 / NBRC 103807 / OttBd1).